A 121-amino-acid chain; its full sequence is Large ribosomal subunit protein bL12 (121 aa).

Belongs to the bacterial ribosomal protein bL12 family. In terms of assembly, homodimer. Part of the ribosomal stalk of the 50S ribosomal subunit. Forms a multimeric L10(L12)X complex, where L10 forms an elongated spine to which 2 to 4 L12 dimers bind in a sequential fashion. Binds GTP-bound translation factors.

Its function is as follows. Forms part of the ribosomal stalk which helps the ribosome interact with GTP-bound translation factors. Is thus essential for accurate translation. This chain is Large ribosomal subunit protein bL12, found in Escherichia coli O81 (strain ED1a).